The chain runs to 34 residues: Cytochrome b6-f complex subunit 5 (34 aa).

Residues Leu5–Ala25 traverse the membrane as a helical segment.

This sequence belongs to the PetG family. As to quaternary structure, the 4 large subunits of the cytochrome b6-f complex are cytochrome b6, subunit IV (17 kDa polypeptide, PetD), cytochrome f and the Rieske protein, while the 4 small subunits are PetG, PetL, PetM and PetN. The complex functions as a dimer.

The protein resides in the plastid. It is found in the chloroplast thylakoid membrane. Functionally, component of the cytochrome b6-f complex, which mediates electron transfer between photosystem II (PSII) and photosystem I (PSI), cyclic electron flow around PSI, and state transitions. PetG is required for either the stability or assembly of the cytochrome b6-f complex. This Oltmannsiellopsis viridis (Marine flagellate) protein is Cytochrome b6-f complex subunit 5.